Reading from the N-terminus, the 220-residue chain is Lipoprotein-releasing system ATP-binding protein LolD (220 aa).

Residues 1–220 form the ABC transporter domain; the sequence is MRAVDIHKSY…YRMKDGQWQS (220 aa). ATP is bound at residue 37 to 44; that stretch reads GASGAGKS.

Belongs to the ABC transporter superfamily. Lipoprotein translocase (TC 3.A.1.125) family. In terms of assembly, the complex is composed of two ATP-binding proteins (LolD) and two transmembrane proteins (LolC and LolE).

It localises to the cell inner membrane. Part of the ABC transporter complex LolCDE involved in the translocation of mature outer membrane-directed lipoproteins, from the inner membrane to the periplasmic chaperone, LolA. Responsible for the formation of the LolA-lipoprotein complex in an ATP-dependent manner. This chain is Lipoprotein-releasing system ATP-binding protein LolD, found in Bdellovibrio bacteriovorus (strain ATCC 15356 / DSM 50701 / NCIMB 9529 / HD100).